A 206-amino-acid polypeptide reads, in one-letter code: ATP-dependent Clp protease proteolytic subunit (206 aa).

Residue S107 is the Nucleophile of the active site. The active site involves H132.

It belongs to the peptidase S14 family. As to quaternary structure, fourteen ClpP subunits assemble into 2 heptameric rings which stack back to back to give a disk-like structure with a central cavity, resembling the structure of eukaryotic proteasomes.

The protein localises to the cytoplasm. The catalysed reaction is Hydrolysis of proteins to small peptides in the presence of ATP and magnesium. alpha-casein is the usual test substrate. In the absence of ATP, only oligopeptides shorter than five residues are hydrolyzed (such as succinyl-Leu-Tyr-|-NHMec, and Leu-Tyr-Leu-|-Tyr-Trp, in which cleavage of the -Tyr-|-Leu- and -Tyr-|-Trp bonds also occurs).. Functionally, cleaves peptides in various proteins in a process that requires ATP hydrolysis. Has a chymotrypsin-like activity. Plays a major role in the degradation of misfolded proteins. This Idiomarina loihiensis (strain ATCC BAA-735 / DSM 15497 / L2-TR) protein is ATP-dependent Clp protease proteolytic subunit.